Here is a 302-residue protein sequence, read N- to C-terminus: Glycine--tRNA ligase alpha subunit (302 aa).

It belongs to the class-II aminoacyl-tRNA synthetase family. In terms of assembly, tetramer of two alpha and two beta subunits.

It is found in the cytoplasm. It carries out the reaction tRNA(Gly) + glycine + ATP = glycyl-tRNA(Gly) + AMP + diphosphate. In Xanthomonas campestris pv. campestris (strain 8004), this protein is Glycine--tRNA ligase alpha subunit.